We begin with the raw amino-acid sequence, 429 residues long: Adenylosuccinate synthetase (429 aa).

Residues 12–18 (GDEGKGK) and 40–42 (GHT) contribute to the GTP site. The active-site Proton acceptor is aspartate 13. Mg(2+)-binding residues include aspartate 13 and glycine 40. Residues 13 to 16 (DEGK), 38 to 41 (NAGH), threonine 129, arginine 143, glutamine 223, threonine 238, and arginine 302 each bind IMP. Histidine 41 serves as the catalytic Proton donor. 298-304 (VVTGRKR) lines the substrate pocket. GTP contacts are provided by residues arginine 304, 330-332 (KLD), and 412-414 (STS).

Belongs to the adenylosuccinate synthetase family. In terms of assembly, homodimer. The cofactor is Mg(2+).

It is found in the cytoplasm. It catalyses the reaction IMP + L-aspartate + GTP = N(6)-(1,2-dicarboxyethyl)-AMP + GDP + phosphate + 2 H(+). It participates in purine metabolism; AMP biosynthesis via de novo pathway; AMP from IMP: step 1/2. Plays an important role in the de novo pathway of purine nucleotide biosynthesis. Catalyzes the first committed step in the biosynthesis of AMP from IMP. This is Adenylosuccinate synthetase from Brucella ovis (strain ATCC 25840 / 63/290 / NCTC 10512).